A 430-amino-acid polypeptide reads, in one-letter code: Tol-Pal system protein TolB (430 aa).

A signal peptide spans 1–21 (MKQALRVAFGFLILWASVLHA).

This sequence belongs to the TolB family. As to quaternary structure, the Tol-Pal system is composed of five core proteins: the inner membrane proteins TolA, TolQ and TolR, the periplasmic protein TolB and the outer membrane protein Pal. They form a network linking the inner and outer membranes and the peptidoglycan layer.

The protein resides in the periplasm. Its function is as follows. Part of the Tol-Pal system, which plays a role in outer membrane invagination during cell division and is important for maintaining outer membrane integrity. TolB occupies a key intermediary position in the Tol-Pal system because it communicates directly with both membrane-embedded components, Pal in the outer membrane and TolA in the inner membrane. This chain is Tol-Pal system protein TolB, found in Shigella flexneri.